Consider the following 193-residue polypeptide: MKLLEERILKDGHILGDNILKVDSFLTHQVDFSLMREIGRVFAEKFAATGITKVVTIEASGIAPAVFTAEALNVPMIFAKKAKNITMNEGILTAQVYSFTKQVTSTVSIAGKFLSPEDKVLIIDDFLANGQAAKGLIQIIEQAGATVQAIGIVIEKSFQDGRDLLEKAGYPVLSLARLDRFENGQVVFKEADL.

Positions 20 and 27 each coordinate xanthine. 128-132 (ANGQA) is a 5-phospho-alpha-D-ribose 1-diphosphate binding site. Lysine 156 provides a ligand contact to xanthine.

This sequence belongs to the purine/pyrimidine phosphoribosyltransferase family. Xpt subfamily. Homodimer.

It localises to the cytoplasm. It catalyses the reaction XMP + diphosphate = xanthine + 5-phospho-alpha-D-ribose 1-diphosphate. The protein operates within purine metabolism; XMP biosynthesis via salvage pathway; XMP from xanthine: step 1/1. Functionally, converts the preformed base xanthine, a product of nucleic acid breakdown, to xanthosine 5'-monophosphate (XMP), so it can be reused for RNA or DNA synthesis. The protein is Xanthine phosphoribosyltransferase of Streptococcus pneumoniae (strain P1031).